Here is an 899-residue protein sequence, read N- to C-terminus: RNA-binding motif protein 25 (899 aa).

The segment covering 1–20 (MADESSSPATGDPNSQKPES) has biased composition (polar residues). The interval 1-112 (MADESSSPAT…SMPQYQPQPG (112 aa)) is disordered. A compositionally biased stretch (pro residues) spans 26–63 (IPNPNPNPSLTPPPPQQHSQPPVAPLVPPGPPYAPPAQ). The RRM domain occupies 204–281 (TTIYIGKIAT…QELLVNVNQA (78 aa)). 2 disordered regions span residues 298–572 (KKAK…EQNL) and 611–778 (GESA…KESG). Composition is skewed to basic and acidic residues over residues 317 to 340 (EQDK…KENI) and 354 to 372 (EADR…ERLK). A compositionally biased stretch (pro residues) spans 375-384 (PLPPPPPPPA). Basic and acidic residues predominate over residues 430-505 (WSKRNDRRSR…QYEKEKEKEK (76 aa)). Residues 434-578 (NDRRSRERGE…EQNLQQQQLD (145 aa)) adopt a coiled-coil conformation. The segment covering 515 to 524 (YEEEEEEDDD) has biased composition (acidic residues). The Nuclear localization signal 1 signature appears at 526 to 533 (SRRRWHRA). Positions 533-568 (AALDERRRRQLREKEDDLADRLKEEEEVAEAKRSAE) are enriched in basic and acidic residues. Residues 626–640 (GSGNESMAIDNNSGS) show a composition bias toward polar residues. 2 stretches are compositionally biased toward basic and acidic residues: residues 723-733 (PKEETIETEKQ) and 740-778 (DKAS…KESG). The short motif at 735 to 742 (SRRSHDKA) is the Nuclear localization signal 2 element. The PWI domain occupies 802 to 899 (EDLFSYEINW…EAGVPVKSKA (98 aa)).

Specifically associates with functional splicing complexes. Associates with exon junction complex (EJC) proteins. In terms of processing, phosphorylated; the phosphorylation level is repressed by abscisic acid (ABA).

The protein localises to the nucleus. RNA-binding protein that acts as a regulator of alternative pre-mRNA splicing. Negative regulator of responses to abscisic acid (ABA), including in early development. The polypeptide is RNA-binding motif protein 25 (Arabidopsis thaliana (Mouse-ear cress)).